The primary structure comprises 284 residues: tRNA pseudouridine synthase A (284 aa).

D62 acts as the Nucleophile in catalysis. Y120 serves as a coordination point for substrate.

It belongs to the tRNA pseudouridine synthase TruA family. As to quaternary structure, homodimer.

The catalysed reaction is uridine(38/39/40) in tRNA = pseudouridine(38/39/40) in tRNA. Its function is as follows. Formation of pseudouridine at positions 38, 39 and 40 in the anticodon stem and loop of transfer RNAs. The chain is tRNA pseudouridine synthase A from Thermosynechococcus vestitus (strain NIES-2133 / IAM M-273 / BP-1).